Consider the following 51-residue polypeptide: Large ribosomal subunit protein eL39 (51 aa).

The protein belongs to the eukaryotic ribosomal protein eL39 family.

This is Large ribosomal subunit protein eL39 from Staphylothermus marinus (strain ATCC 43588 / DSM 3639 / JCM 9404 / F1).